Here is a 493-residue protein sequence, read N- to C-terminus: Ribose import ATP-binding protein RbsA (493 aa).

2 consecutive ABC transporter domains span residues 5-241 (LKIS…VGRR) and 252-491 (EKGE…AAAI). 37 to 44 (GENGAGKS) contributes to the ATP binding site.

This sequence belongs to the ABC transporter superfamily. Ribose importer (TC 3.A.1.2.1) family. In terms of assembly, the complex is composed of an ATP-binding protein (RbsA), two transmembrane proteins (RbsC) and a solute-binding protein (RbsB).

It localises to the cell inner membrane. It carries out the reaction D-ribose(out) + ATP + H2O = D-ribose(in) + ADP + phosphate + H(+). Part of the ABC transporter complex RbsABC involved in ribose import. Responsible for energy coupling to the transport system. The polypeptide is Ribose import ATP-binding protein RbsA (Haemophilus influenzae (strain 86-028NP)).